The chain runs to 496 residues: uncharacterized protein (496 aa).

Residues 118 to 129 are compositionally biased toward basic and acidic residues; that stretch reads LDRPFIKPRREN. Residues 118-187 form a disordered region; it reads LDRPFIKPRR…NPHQSNRNTS (70 aa). Residues 151-187 are compositionally biased toward polar residues; that stretch reads TSDSQYASPFENHSITNLPIGQKQPFNNPHQSNRNTS.

This is an uncharacterized protein from Acanthamoeba polyphaga mimivirus (APMV).